A 286-amino-acid polypeptide reads, in one-letter code: Bark agglutinin I polypeptide B (286 aa).

Positions 1–31 (MASYKFKTQNSFLLLLSISFFFLLLLNKVNS) are cleaved as a signal peptide. The N-linked (GlcNAc...) asparagine glycan is linked to N148. Residues E157 and D159 each contribute to the Mn(2+) site. D159, N163, and D167 together coordinate Ca(2+). Residues D167 and H172 each contribute to the Mn(2+) site.

Belongs to the leguminous lectin family. RPbAI is composed of two polypeptides, A and B, that associate into five different tetrameric isolectins. The A4 combination is the only one devoid of agglutination activity. Isoform B4 displays maximal agglutination activity. In terms of tissue distribution, mostly in the axial and ray parenchymal cells of the inner bark. Fewer in the axial and ray parenchymal cells of the xylem. Strong expression in bark. The lectin accumulates in the inner bark in autumn and winter and disappears in may.

Bark lectins are storage proteins that probably maintain stocks of nitrogen during dormant period. Self-aggregatable molecules that can bind their own carbohydrate side chains. They could also play a role in the plant's defense against phytophagous invertebrates or herbivorous higher animals. In Robinia pseudoacacia (Black locust), this protein is Bark agglutinin I polypeptide B.